We begin with the raw amino-acid sequence, 86 residues long: UPF0297 protein STH1998 (86 aa).

Belongs to the UPF0297 family.

The sequence is that of UPF0297 protein STH1998 from Symbiobacterium thermophilum (strain DSM 24528 / JCM 14929 / IAM 14863 / T).